The primary structure comprises 204 residues: Transmembrane protein 186 (204 aa).

Residues 1–69 (MLELLCRVSP…RLVAALSRLK (69 aa)) are Mitochondrial matrix-facing. The chain crosses the membrane as a helical span at residues 70 to 90 (VYQAVITAAGTPIVFALGSAG). At 91–95 (QLSTD) the chain is on the mitochondrial intermembrane side. A helical transmembrane segment spans residues 96–116 (ALAIYAAIGVTGLITLTLASY). Residues 117–204 (ASSNLVGFIY…RQLFEGLFGN (88 aa)) lie on the Mitochondrial matrix side of the membrane.

This sequence belongs to the TMEM186 family. As to quaternary structure, associates with mitochondrial complex I assembly intermediates during its biogenesis.

The protein resides in the mitochondrion inner membrane. In terms of biological role, as part of the MCIA complex, required for efficient assembly of the mitochondrial complex I. The sequence is that of Transmembrane protein 186 from Drosophila melanogaster (Fruit fly).